We begin with the raw amino-acid sequence, 101 residues long: NAD(P)H-quinone oxidoreductase subunit 4L, chloroplastic (101 aa).

The next 3 membrane-spanning stretches (helical) occupy residues 2–22 (ILEH…YGLI), 30–52 (ALMC…SDFF), and 61–81 (IFSI…LAIV).

Belongs to the complex I subunit 4L family. As to quaternary structure, NDH is composed of at least 16 different subunits, 5 of which are encoded in the nucleus.

It localises to the plastid. The protein resides in the chloroplast thylakoid membrane. It carries out the reaction a plastoquinone + NADH + (n+1) H(+)(in) = a plastoquinol + NAD(+) + n H(+)(out). The catalysed reaction is a plastoquinone + NADPH + (n+1) H(+)(in) = a plastoquinol + NADP(+) + n H(+)(out). In terms of biological role, NDH shuttles electrons from NAD(P)H:plastoquinone, via FMN and iron-sulfur (Fe-S) centers, to quinones in the photosynthetic chain and possibly in a chloroplast respiratory chain. The immediate electron acceptor for the enzyme in this species is believed to be plastoquinone. Couples the redox reaction to proton translocation, and thus conserves the redox energy in a proton gradient. The polypeptide is NAD(P)H-quinone oxidoreductase subunit 4L, chloroplastic (Oenothera glazioviana (Large-flowered evening primrose)).